The sequence spans 299 residues: Bifunctional protein FolD 2 (299 aa).

NADP(+) contacts are provided by residues 168–170 (GRS), S193, and I234.

This sequence belongs to the tetrahydrofolate dehydrogenase/cyclohydrolase family. As to quaternary structure, homodimer.

It carries out the reaction (6R)-5,10-methylene-5,6,7,8-tetrahydrofolate + NADP(+) = (6R)-5,10-methenyltetrahydrofolate + NADPH. It catalyses the reaction (6R)-5,10-methenyltetrahydrofolate + H2O = (6R)-10-formyltetrahydrofolate + H(+). It functions in the pathway one-carbon metabolism; tetrahydrofolate interconversion. In terms of biological role, catalyzes the oxidation of 5,10-methylenetetrahydrofolate to 5,10-methenyltetrahydrofolate and then the hydrolysis of 5,10-methenyltetrahydrofolate to 10-formyltetrahydrofolate. The polypeptide is Bifunctional protein FolD 2 (Rhizobium meliloti (strain 1021) (Ensifer meliloti)).